We begin with the raw amino-acid sequence, 62 residues long: Large ribosomal subunit protein bL35 (62 aa).

Residues 31–62 form a disordered region; the sequence is HLAQNKTTKQKRQSRKSAQMHSSDLKRFKALI. Residues 53–62 are compositionally biased toward basic and acidic residues; that stretch reads SDLKRFKALI.

The protein belongs to the bacterial ribosomal protein bL35 family.

The sequence is that of Large ribosomal subunit protein bL35 from Mycoplasmopsis agalactiae (strain NCTC 10123 / CIP 59.7 / PG2) (Mycoplasma agalactiae).